The sequence spans 448 residues: Probable glycine dehydrogenase (decarboxylating) subunit 1 (448 aa).

This sequence belongs to the GcvP family. N-terminal subunit subfamily. In terms of assembly, the glycine cleavage system is composed of four proteins: P, T, L and H. In this organism, the P 'protein' is a heterodimer of two subunits.

It carries out the reaction N(6)-[(R)-lipoyl]-L-lysyl-[glycine-cleavage complex H protein] + glycine + H(+) = N(6)-[(R)-S(8)-aminomethyldihydrolipoyl]-L-lysyl-[glycine-cleavage complex H protein] + CO2. Its function is as follows. The glycine cleavage system catalyzes the degradation of glycine. The P protein binds the alpha-amino group of glycine through its pyridoxal phosphate cofactor; CO(2) is released and the remaining methylamine moiety is then transferred to the lipoamide cofactor of the H protein. The chain is Probable glycine dehydrogenase (decarboxylating) subunit 1 from Thermomicrobium roseum (strain ATCC 27502 / DSM 5159 / P-2).